The sequence spans 439 residues: Histidine--tRNA ligase (439 aa).

Belongs to the class-II aminoacyl-tRNA synthetase family. As to quaternary structure, homodimer.

The protein resides in the cytoplasm. The enzyme catalyses tRNA(His) + L-histidine + ATP = L-histidyl-tRNA(His) + AMP + diphosphate + H(+). The chain is Histidine--tRNA ligase (hisS) from Leptospira interrogans serogroup Icterohaemorrhagiae serovar Lai (strain 56601).